Consider the following 345-residue polypeptide: Isopentenyl-diphosphate delta-isomerase (345 aa).

6–7 contacts substrate; sequence RK. FMN contacts are provided by residues 63-65, S93, and N122; that span reads SMT. Substrate is bound at residue 93-95; that stretch reads SQR. Residue Q156 participates in substrate binding. E157 is a Mg(2+) binding site. FMN contacts are provided by residues K188, T218, 265–267, and 286–287; these read GLR and AL.

It belongs to the IPP isomerase type 2 family. As to quaternary structure, homooctamer. Dimer of tetramers. FMN is required as a cofactor. It depends on NADPH as a cofactor. The cofactor is Mg(2+).

The protein resides in the cytoplasm. The enzyme catalyses isopentenyl diphosphate = dimethylallyl diphosphate. Functionally, involved in the biosynthesis of isoprenoids. Catalyzes the 1,3-allylic rearrangement of the homoallylic substrate isopentenyl (IPP) to its allylic isomer, dimethylallyl diphosphate (DMAPP). This is Isopentenyl-diphosphate delta-isomerase from Archaeoglobus fulgidus (strain ATCC 49558 / DSM 4304 / JCM 9628 / NBRC 100126 / VC-16).